A 577-amino-acid chain; its full sequence is Adenine deaminase (577 aa).

This sequence belongs to the metallo-dependent hydrolases superfamily. Adenine deaminase family. It depends on Mn(2+) as a cofactor.

The catalysed reaction is adenine + H2O + H(+) = hypoxanthine + NH4(+). This chain is Adenine deaminase, found in Geobacillus kaustophilus (strain HTA426).